We begin with the raw amino-acid sequence, 312 residues long: L-type lectin-like domain-containing protein C126.08c (312 aa).

A signal peptide spans 1–22; the sequence is MFFSVKNVFLLGIFGFVLGALA. Residues 23 to 280 lie on the Extracellular side of the membrane; the sequence is ETSHLERLSL…QKKGSFKKRL (258 aa). The L-type lectin-like domain occupies 24–248; it reads TSHLERLSLE…EIASILSRTI (225 aa). The helical transmembrane segment at 281–301 threads the bilayer; it reads IILLLSLIVIFSIFALRSYQV. The Cytoplasmic portion of the chain corresponds to 302–312; the sequence is QQEKNRRTTVL.

The protein resides in the membrane. The protein localises to the endoplasmic reticulum. It is found in the golgi apparatus. Its subcellular location is the vacuole. This is L-type lectin-like domain-containing protein C126.08c from Schizosaccharomyces pombe (strain 972 / ATCC 24843) (Fission yeast).